Consider the following 88-residue polypeptide: Small ribosomal subunit protein bS20 (88 aa).

Belongs to the bacterial ribosomal protein bS20 family.

In terms of biological role, binds directly to 16S ribosomal RNA. This is Small ribosomal subunit protein bS20 from Natranaerobius thermophilus (strain ATCC BAA-1301 / DSM 18059 / JW/NM-WN-LF).